The following is a 534-amino-acid chain: CTP synthase (534 aa).

The interval 1–266 is amidoligase domain; it reads MKTKFIFVTG…DEQVVEKLNI (266 aa). CTP is bound at residue Ser-14. Ser-14 provides a ligand contact to UTP. Residues 15–20 and Asp-72 each bind ATP; that span reads SIGKGL. Mg(2+) is bound by residues Asp-72 and Glu-140. CTP contacts are provided by residues 147–149, 187–192, and Lys-223; these read DIE and KTKPTQ. Residues 187–192 and Lys-223 contribute to the UTP site; that span reads KTKPTQ. The Glutamine amidotransferase type-1 domain maps to 292–534; it reads RIAIVGKYVN…IAAALHNIKA (243 aa). Position 354 (Gly-354) interacts with L-glutamine. Cys-381 functions as the Nucleophile; for glutamine hydrolysis in the catalytic mechanism. L-glutamine is bound by residues 382–385, Glu-405, and Arg-462; that span reads LGMQ. Residues His-507 and Glu-509 contribute to the active site.

Belongs to the CTP synthase family. In terms of assembly, homotetramer.

The enzyme catalyses UTP + L-glutamine + ATP + H2O = CTP + L-glutamate + ADP + phosphate + 2 H(+). The catalysed reaction is L-glutamine + H2O = L-glutamate + NH4(+). It carries out the reaction UTP + NH4(+) + ATP = CTP + ADP + phosphate + 2 H(+). It participates in pyrimidine metabolism; CTP biosynthesis via de novo pathway; CTP from UDP: step 2/2. With respect to regulation, allosterically activated by GTP, when glutamine is the substrate; GTP has no effect on the reaction when ammonia is the substrate. The allosteric effector GTP functions by stabilizing the protein conformation that binds the tetrahedral intermediate(s) formed during glutamine hydrolysis. Inhibited by the product CTP, via allosteric rather than competitive inhibition. Catalyzes the ATP-dependent amination of UTP to CTP with either L-glutamine or ammonia as the source of nitrogen. Regulates intracellular CTP levels through interactions with the four ribonucleotide triphosphates. This is CTP synthase from Geotalea uraniireducens (strain Rf4) (Geobacter uraniireducens).